The chain runs to 693 residues: DNA ligase (693 aa).

Residues 40-44, 89-90, and Glu121 contribute to the NAD(+) site; these read DSEYD and SL. Lys123 functions as the N6-AMP-lysine intermediate in the catalytic mechanism. Residues Arg144, Glu179, Lys295, and Lys319 each contribute to the NAD(+) site. Zn(2+)-binding residues include Cys413, Cys416, Cys431, and Cys437. One can recognise a BRCT domain in the interval 610 to 693; sequence REQNILTGKI…AFIKCLEKEV (84 aa).

The protein belongs to the NAD-dependent DNA ligase family. LigA subfamily. It depends on Mg(2+) as a cofactor. Mn(2+) is required as a cofactor.

It catalyses the reaction NAD(+) + (deoxyribonucleotide)n-3'-hydroxyl + 5'-phospho-(deoxyribonucleotide)m = (deoxyribonucleotide)n+m + AMP + beta-nicotinamide D-nucleotide.. Functionally, DNA ligase that catalyzes the formation of phosphodiester linkages between 5'-phosphoryl and 3'-hydroxyl groups in double-stranded DNA using NAD as a coenzyme and as the energy source for the reaction. It is essential for DNA replication and repair of damaged DNA. In Rickettsia typhi (strain ATCC VR-144 / Wilmington), this protein is DNA ligase.